The sequence spans 107 residues: UPF0045 protein in glkA 3'region (107 aa).

The protein belongs to the UPF0045 family.

In Staphylococcus xylosus, this protein is UPF0045 protein in glkA 3'region (dglA).